The following is a 387-amino-acid chain: Succinyl-diaminopimelate desuccinylase (387 aa).

His-75 is a Zn(2+) binding site. Asp-77 is a catalytic residue. Asp-108 provides a ligand contact to Zn(2+). The active-site Proton acceptor is Glu-139. The Zn(2+) site is built by Glu-140, Glu-168, and His-357.

Belongs to the peptidase M20A family. DapE subfamily. In terms of assembly, homodimer. Zn(2+) serves as cofactor. Requires Co(2+) as cofactor.

The catalysed reaction is N-succinyl-(2S,6S)-2,6-diaminopimelate + H2O = (2S,6S)-2,6-diaminopimelate + succinate. Its pathway is amino-acid biosynthesis; L-lysine biosynthesis via DAP pathway; LL-2,6-diaminopimelate from (S)-tetrahydrodipicolinate (succinylase route): step 3/3. Catalyzes the hydrolysis of N-succinyl-L,L-diaminopimelic acid (SDAP), forming succinate and LL-2,6-diaminopimelate (DAP), an intermediate involved in the bacterial biosynthesis of lysine and meso-diaminopimelic acid, an essential component of bacterial cell walls. In Caulobacter sp. (strain K31), this protein is Succinyl-diaminopimelate desuccinylase.